The following is a 163-amino-acid chain: MAETIEVLVAGGQADPGPPLGPELGPTPVDVQAVVQEINDQTEAFDGTEVPVTIEYEDDGSFSIEVGVPPTAALVKDEAGFDTGSGEPQENFVADLSIEQLKTIAEQKKPDLLAYDARNAAKEVAGTCASLGVTIEGEDARTFNERVDDGDYDDVLGDELAAA.

The tract at residues 1–26 (MAETIEVLVAGGQADPGPPLGPELGP) is disordered.

Belongs to the universal ribosomal protein uL11 family. Part of the ribosomal stalk of the 50S ribosomal subunit. Interacts with L10 and the large rRNA to form the base of the stalk. L10 forms an elongated spine to which L12 dimers bind in a sequential fashion forming a multimeric L10(L12)X complex.

Its function is as follows. Forms part of the ribosomal stalk which helps the ribosome interact with GTP-bound translation factors. The polypeptide is Large ribosomal subunit protein uL11 (Halobacterium salinarum (strain ATCC 29341 / DSM 671 / R1)).